The chain runs to 521 residues: Two-component response regulator ARR11 (521 aa).

Positions Arg-12–Leu-127 constitute a Response regulatory domain. A 4-aspartylphosphate modification is found at Asp-63. A Nuclear localization signal motif is present at residues Lys-192–Arg-195. The myb-like GARP DNA-binding region spans Arg-195 to Arg-246.

It belongs to the ARR family. Type-B subfamily. As to quaternary structure, binds the target DNA as a monomer. Post-translationally, two-component system major event consists of a His-to-Asp phosphorelay between a sensor histidine kinase (HK) and a response regulator (RR). In plants, the His-to-Asp phosphorelay involves an additional intermediate named Histidine-containing phosphotransfer protein (HPt). This multistep phosphorelay consists of a His-Asp-His-Asp sequential transfer of a phosphate group between first a His and an Asp of the HK protein, followed by the transfer to a conserved His of the HPt protein and finally the transfer to an Asp in the receiver domain of the RR protein. Detected in the whole plant. Predominantly expressed in roots and stems.

It is found in the nucleus. Its function is as follows. Transcriptional activator that binds specifically to the DNA sequence 5'-[AG]GATT-3'. Functions as a response regulator involved in His-to-Asp phosphorelay signal transduction system. Phosphorylation of the Asp residue in the receiver domain activates the ability of the protein to promote the transcription of target genes. Could directly activate some type-A response regulators in response to cytokinins. This is Two-component response regulator ARR11 (ARR11) from Arabidopsis thaliana (Mouse-ear cress).